Consider the following 123-residue polypeptide: Large ribosomal subunit protein eL8 (123 aa).

This sequence belongs to the eukaryotic ribosomal protein eL8 family. In terms of assembly, part of the 50S ribosomal subunit. Probably part of the RNase P complex.

Its subcellular location is the cytoplasm. Functionally, multifunctional RNA-binding protein that recognizes the K-turn motif in ribosomal RNA, the RNA component of RNase P, box H/ACA, box C/D and box C'/D' sRNAs. The sequence is that of Large ribosomal subunit protein eL8 from Methanothermobacter thermautotrophicus (strain ATCC 29096 / DSM 1053 / JCM 10044 / NBRC 100330 / Delta H) (Methanobacterium thermoautotrophicum).